Here is a 122-residue protein sequence, read N- to C-terminus: Large ribosomal subunit protein bL19 (122 aa).

Belongs to the bacterial ribosomal protein bL19 family.

In terms of biological role, this protein is located at the 30S-50S ribosomal subunit interface and may play a role in the structure and function of the aminoacyl-tRNA binding site. This chain is Large ribosomal subunit protein bL19, found in Acinetobacter baumannii (strain AB307-0294).